The chain runs to 280 residues: Biotin carboxyl carrier protein of acetyl-CoA carboxylase 1, chloroplastic (280 aa).

A chloroplast-targeting transit peptide spans 1-82 (MASSSFSVTS…SNAAKVDGPS (82 aa)). Residues 52–75 (PSRSSYPVVKAQSNKVSTGASSNA) show a composition bias toward polar residues. 2 disordered regions span residues 52–106 (PSRS…ATEE) and 164–215 (QPSY…GTFY). Residues 177-188 (PAAAAPAPSTPA) are compositionally biased toward low complexity. The segment covering 189 to 198 (SLPPPSPPTP) has biased composition (pro residues). A Biotinyl-binding domain is found at 203 to 279 (LPTVKSPMAG…SLDTPLFVVQ (77 aa)). Residue K245 is modified to N6-biotinyllysine.

Acetyl-CoA carboxylase is a heterohexamer composed of biotin carboxyl carrier protein, biotin carboxylase and 2 subunits each of ACCase subunit alpha and ACCase plastid-coded subunit beta (accD). As to expression, present in developing tissues from roots, leaves, flowers, siliques and seeds (at protein level).

The protein localises to the plastid. The protein resides in the chloroplast. The protein operates within lipid metabolism; fatty acid biosynthesis. This protein is a component of the acetyl coenzyme A carboxylase complex; first, biotin carboxylase catalyzes the carboxylation of the carrier protein and then the transcarboxylase transfers the carboxyl group to form malonyl-CoA. The polypeptide is Biotin carboxyl carrier protein of acetyl-CoA carboxylase 1, chloroplastic (BCCP1) (Arabidopsis thaliana (Mouse-ear cress)).